We begin with the raw amino-acid sequence, 816 residues long: H(+)/Cl(-) exchange transporter 5 (816 aa).

Residues 1 to 26 form a disordered region; that stretch reads MAMWQGAMDNRGFQQGSFSSFQNSSS. At 1–124 the chain is on the cytoplasmic side; that stretch reads MAMWQGAMDN…WALIHSVSDA (124 aa). Positions 12-25 are enriched in low complexity; it reads GFQQGSFSSFQNSS. The next 2 helical transmembrane spans lie at 125-162 and 208-231; these read FSGWLLMLLIGLLSGSLAGLIDISAHWMTDLKEGICTG and VNYFMYVLWALLFAFLAVSLVKVF. Residues 237–241 carry the Selectivity filter part_1 motif; sequence GSGIP. Ser238 serves as a coordination point for chloride. Positions 240–247 form an intramembrane region, helical; it reads IPEIKTIL. 2 helical membrane passes run 256–275 and 281–300; these read LGKWTLVIKTITLVLAVSSG and EGPLVHVACCCGNILCHCFN. A Selectivity filter part_2 motif is present at residues 279–283; it reads GKEGP. Intramembrane regions (helical) lie at residues 312-324 and 328-336; these read VLSAAAAAGVSVA and PIGGVLFSL. A run of 5 helical transmembrane segments spans residues 348–366, 389–415, 422–442, 498–518, and 523–542; these read LWRSFFAALVAAFTLRSIN, LVPFILLGIFGGLWGALFIRTNIAWCR, LGKYPVIEVLVVTAITAILAF, MWQLALTLILKIVITIFTFGM, and GLFIPSMAVGAIAGRLLGVG. The Selectivity filter part_3 signature appears at 523–527; sequence GLFIP. Residue Phe525 participates in chloride binding. The segment at residues 570–584 is an intramembrane region (helical); that stretch reads GLYAMVGAAACLGGV. Positions 585 to 587 form an intramembrane region, note=Loop between two helices; that stretch reads TRM. Positions 588-599 form an intramembrane region, helical; sequence TVSLVVIMFELT. The segment at residues 600–604 is an intramembrane region (note=Loop between two helices); the sequence is GGLEY. Residues 605-622 traverse the membrane as a helical segment; the sequence is IVPLMAAAMTSKWVADAL. Over 623–816 the chain is Cytoplasmic; the sequence is GREGIYDAHI…NQDPDSILFN (194 aa). Residue Tyr628 participates in chloride binding. CBS domains lie at 656-720 and 752-812; these read MKPR…ARKK and ILDL…DPDS. ATP-binding positions include Thr666, 687–689, and 794–797; these read YSG and TKKD.

This sequence belongs to the chloride channel (TC 2.A.49) family. ClC-5/CLCN5 subfamily. In terms of assembly, interacts with NEDD4 and NEDD4L. Post-translationally, ubiquitinated by NEDD4L in the presence of albumin; which promotes endocytosis and proteasomal degradation. Kidney. Moderately expressed in aortic vascular smooth muscle and endothelial cells, and at a slightly higher level in the coronary vascular smooth muscle.

The protein localises to the golgi apparatus membrane. It localises to the endosome membrane. Its subcellular location is the cell membrane. It catalyses the reaction 2 chloride(in) + H(+)(out) = 2 chloride(out) + H(+)(in). Proton-coupled chloride transporter. Functions as antiport system and exchanges chloride ions against protons. Important for normal acidification of the endosome lumen. May play an important role in renal tubular function. The CLC channel family contains both chloride channels and proton-coupled anion transporters that exchange chloride or another anion for protons. The absence of conserved gating glutamate residues is typical for family members that function as channels. This Homo sapiens (Human) protein is H(+)/Cl(-) exchange transporter 5.